The following is a 190-amino-acid chain: Recombination protein RecR (190 aa).

The segment at 58-73 (CGQCGALSENELCEIC) adopts a C4-type zinc-finger fold. In terms of domain architecture, Toprim spans 81 to 167 (NILCIVESPK…TFSKIAQGIP (87 aa)).

This sequence belongs to the RecR family.

Its function is as follows. May play a role in DNA repair. It seems to be involved in an RecBC-independent recombinational process of DNA repair. It may act with RecF and RecO. This chain is Recombination protein RecR, found in Campylobacter jejuni subsp. jejuni serotype O:6 (strain 81116 / NCTC 11828).